Consider the following 511-residue polypeptide: ATP synthase subunit alpha, plastid (511 aa).

Position 170 to 177 (G170 to T177) interacts with ATP.

Belongs to the ATPase alpha/beta chains family. As to quaternary structure, F-type ATPases have 2 components, CF(1) - the catalytic core - and CF(0) - the membrane proton channel. CF(1) has five subunits: alpha(3), beta(3), gamma(1), delta(1), epsilon(1). CF(0) has four main subunits: a, b, b' and c.

The protein localises to the plastid membrane. It catalyses the reaction ATP + H2O + 4 H(+)(in) = ADP + phosphate + 5 H(+)(out). Its function is as follows. Produces ATP from ADP in the presence of a proton gradient across the membrane. The alpha chain is a regulatory subunit. This is ATP synthase subunit alpha, plastid from Cuscuta reflexa (Southern Asian dodder).